A 1116-amino-acid chain; its full sequence is cGMP-specific 3',5'-cyclic phosphodiesterase (1116 aa).

Disordered stretches follow at residues 1–36 and 82–136; these read MTDVSATTGRAGDRVSSTSSEVAVETTSQALTNGAA and KSEC…ATQQ. Over residues 15 to 28 the composition is skewed to low complexity; sequence VSSTSSEVAVETTS. Over residues 86–136 the composition is skewed to polar residues; that stretch reads HSQSNNNQHVETAPSKQSSDSEASAPTTVSIPSANAKINSSSSGKTTATQQ. 2 consecutive GAF domains span residues 241–393 and 425–611; these read DIDV…GIGI and NLEC…GLGI. One can recognise a PDEase domain in the interval 641-964; that stretch reads SQDQTEKLAQ…RNWQDLAEKV (324 aa). Residue His-717 is the Proton donor of the active site. His-721, His-757, Asp-758, and Asp-868 together coordinate a divalent metal cation. Disordered regions lie at residues 1005–1031 and 1067–1116; these read QHGGSAGGGEDTHTPEHQRSSSRLSIK and HVSE…CALL. Composition is skewed to basic and acidic residues over residues 1014-1023 and 1067-1076; these read EDTHTPEHQR and HVSEDMDDKS. A compositionally biased stretch (low complexity) spans 1085-1103; it reads SGSVGRMSASSSTSSAGTV. The segment covering 1106–1116 has biased composition (basic residues); sequence SKKRSKLCALL. Residue Cys-1113 is modified to Cysteine methyl ester. Residue Cys-1113 is the site of S-farnesyl cysteine attachment. The propeptide at 1114 to 1116 is removed in mature form; the sequence is ALL.

It belongs to the cyclic nucleotide phosphodiesterase family. As to quaternary structure, interacts with PrBP. It depends on a divalent metal cation as a cofactor.

The protein localises to the cell membrane. It catalyses the reaction 3',5'-cyclic GMP + H2O = GMP + H(+). Has a role regulating cGMP transport in Malpighian tubule principal cells. The chain is cGMP-specific 3',5'-cyclic phosphodiesterase from Drosophila mojavensis (Fruit fly).